Here is a 529-residue protein sequence, read N- to C-terminus: Putative UPF0481 protein At3g02645 (529 aa).

2 N-linked (GlcNAc...) asparagine glycosylation sites follow: N365 and N403. The chain crosses the membrane as a helical span at residues 498-518 (ILAFLAAVLLLMLVSLQLFSL).

Belongs to the UPF0481 family.

The protein resides in the membrane. The polypeptide is Putative UPF0481 protein At3g02645 (Arabidopsis thaliana (Mouse-ear cress)).